Reading from the N-terminus, the 396-residue chain is 1-deoxy-D-xylulose 5-phosphate reductoisomerase (396 aa).

The NADPH site is built by Thr15, Gly16, Ser17, Ile18, Gly41, and Asn129. Lys130 is a 1-deoxy-D-xylulose 5-phosphate binding site. Position 131 (Glu131) interacts with NADPH. Mn(2+) is bound at residue Asp155. Positions 156, 157, 182, and 205 each coordinate 1-deoxy-D-xylulose 5-phosphate. Glu157 contacts Mn(2+). Gly211 serves as a coordination point for NADPH. The 1-deoxy-D-xylulose 5-phosphate site is built by Ser218, Asn223, Lys224, and Glu227. Glu227 provides a ligand contact to Mn(2+).

It belongs to the DXR family. Requires Mg(2+) as cofactor. The cofactor is Mn(2+).

The catalysed reaction is 2-C-methyl-D-erythritol 4-phosphate + NADP(+) = 1-deoxy-D-xylulose 5-phosphate + NADPH + H(+). It functions in the pathway isoprenoid biosynthesis; isopentenyl diphosphate biosynthesis via DXP pathway; isopentenyl diphosphate from 1-deoxy-D-xylulose 5-phosphate: step 1/6. In terms of biological role, catalyzes the NADPH-dependent rearrangement and reduction of 1-deoxy-D-xylulose-5-phosphate (DXP) to 2-C-methyl-D-erythritol 4-phosphate (MEP). This is 1-deoxy-D-xylulose 5-phosphate reductoisomerase from Xanthomonas euvesicatoria pv. vesicatoria (strain 85-10) (Xanthomonas campestris pv. vesicatoria).